We begin with the raw amino-acid sequence, 560 residues long: Protein GAT2 (560 aa).

Disordered stretches follow at residues Arg-274–Lys-297, Phe-345–Ser-383, and Leu-412–Lys-461. Positions Ser-347 to Pro-361 are enriched in low complexity. The span at Arg-369–Met-378 shows a compositional bias: basic and acidic residues. Basic residues predominate over residues Thr-414–Ala-425. Residues Arg-428 to Ala-456 show a composition bias toward polar residues. Residues Cys-472 to Cys-497 form a GATA-type zinc finger.

This is Protein GAT2 (GAT2) from Saccharomyces cerevisiae (strain ATCC 204508 / S288c) (Baker's yeast).